The following is a 150-amino-acid chain: MFDLSWSEIALVGVVALIVIGPKDLPNVLRTAGKWVRKIRSLGSEFQRQMDDVMRETGAEDVRRQVTTLARTDVGRKIDQAIDPDGKLAASLSSVPPPSPAGPFGTSPAAPPSLPPQAPAQPVPPATGAAPPSPSAGPDRRTDGSLPPQD.

Residues 1-21 (MFDLSWSEIALVGVVALIVIG) traverse the membrane as a helical segment. Basic and acidic residues predominate over residues 77-86 (KIDQAIDPDG). The tract at residues 77-150 (KIDQAIDPDG…RTDGSLPPQD (74 aa)) is disordered. The segment covering 109–135 (AAPPSLPPQAPAQPVPPATGAAPPSPS) has biased composition (pro residues).

The protein belongs to the TatB family. As to quaternary structure, the Tat system comprises two distinct complexes: a TatABC complex, containing multiple copies of TatA, TatB and TatC subunits, and a separate TatA complex, containing only TatA subunits. Substrates initially bind to the TatABC complex, which probably triggers association of the separate TatA complex to form the active translocon.

Its subcellular location is the cell inner membrane. Functionally, part of the twin-arginine translocation (Tat) system that transports large folded proteins containing a characteristic twin-arginine motif in their signal peptide across membranes. Together with TatC, TatB is part of a receptor directly interacting with Tat signal peptides. TatB may form an oligomeric binding site that transiently accommodates folded Tat precursor proteins before their translocation. The polypeptide is Sec-independent protein translocase protein TatB (Rhodospirillum rubrum (strain ATCC 11170 / ATH 1.1.1 / DSM 467 / LMG 4362 / NCIMB 8255 / S1)).